Here is an 86-residue protein sequence, read N- to C-terminus: Small ribosomal subunit protein bS20 (86 aa).

A compositionally biased stretch (basic residues) spans 1–27 (MANIKSAKKRAVQSEKRRQHNASRRSM). The tract at residues 1 to 28 (MANIKSAKKRAVQSEKRRQHNASRRSMM) is disordered.

Belongs to the bacterial ribosomal protein bS20 family.

Its function is as follows. Binds directly to 16S ribosomal RNA. This Proteus mirabilis (strain HI4320) protein is Small ribosomal subunit protein bS20.